We begin with the raw amino-acid sequence, 434 residues long: Progestin and adipoQ receptor-like protein 1 (434 aa).

Residues 1-201 (MNPDEVNRAL…KSIWSLHTET (201 aa)) lie on the Cytoplasmic side of the membrane. Disordered regions lie at residues 74 to 103 (LPQQEGHRSRATSFAGRIRAGSDDEAMPKH) and 118 to 137 (EINLQGTPDKRKDDEDELEV). The helical transmembrane segment at 202 to 222 (GNIWTHLIGCVAFFFLACWFL) threads the bilayer. Over 223–234 (TRPDNHIQFQEK) the chain is Extracellular. A helical membrane pass occupies residues 235–255 (VVFSFFFAGAVLCLGLSFAFH). Residues 256 to 273 (TLSCHSVNVVKIFCKLDY) are Cytoplasmic-facing. The helical transmembrane segment at 274 to 294 (MGISLLIIGSFIPWIYYGFYC) threads the bilayer. Residues 295-299 (RREPK) lie on the Extracellular side of the membrane. A helical membrane pass occupies residues 300–320 (ITYIAMVSVLGIGAIVVSLWD). Topologically, residues 321 to 331 (KFSESRFRPIR) are cytoplasmic. A helical transmembrane segment spans residues 332 to 352 (AAVFVGMGCSGVIPTIHYIIT). Topologically, residues 353–362 (DGVHSLFADN) are extracellular. A helical membrane pass occupies residues 363-383 (SFHWLLLMAFLYLLGAGLYAT). The Cytoplasmic portion of the chain corresponds to 384–403 (RTPERFFPGKCDIWFQSHQL). Residues 404–424 (FHTCVVIAAFVHYYGISEMAF) traverse the membrane as a helical segment. The Extracellular segment spans residues 425–434 (ARLNEQCPVR).

It belongs to the ADIPOR family.

It localises to the membrane. Probable receptor, which may be involved in metabolic pathways that regulate lipid metabolism such as fatty acid oxidation. The polypeptide is Progestin and adipoQ receptor-like protein 1 (paqr-1) (Caenorhabditis elegans).